The following is a 953-amino-acid chain: MSQPDGAAAPQVDGASAPGRKSAVNRERLKRSQKSSKVEGPEPVPAEASLSAEQGTMTEVKVKTEVPDDYIQEVIWQGEAKEEKAGGKDSTGDVPAEICVVIGGVRNQQTLDGKAPEGSPHGGSVRSRYSGTWIFDQALKYASGSYECGICGKKYKYYNCFQTHVRAHRDTEATSGEGVSQSNNFRYTCDICGKKYKYYSCFQEHRDLHAVDVFSVEGAPENRADPFDQGVVATDEVKEEPPEPFQKIGPKTGNYTCEFCGKQYKYYTPYQEHVALHAPISTAPGWEPPEDPDTGSECSHPEVTPSPRFVAAKTQSNQSGKKAPASVVRCTSLLHRTPPATQTQTFRAPNSGSPASKAAAAENTFSRRVESKAQNHFEETNSSSQNSSEPYTCGACGIQFQFYSNLLEHMQSHAADNENNITSNQSRSPPAAVEEKWKPQAQRNSANNTTTSGLTPNSVIPEKERQNIAERLLRVMCADLGALSVVSGKEFLKLAQTLVDSGARYGAFSVTEILGNFNTLALKHLPRMYNQVKVKVTCALGSNACLGIGVTCHSQSVGPDSCYILTAYQAEGNHIKSYVLGVKGADIRDSGDLVHHWVQNVLSEFVMSEIRTVYVTDCRVSTSAFSKAGMCLRCSACALNSVVQSVLSKRTLQARSMHEVIELLNVCEDLAGSTGLAKETFGSLEETSPPPCWNSVTDSLLLVHERYEQICEFYSRAKKMNLIQSLNKHLLSNLAAILTPVKQAVIELSNESQPTLQLVLPTYVRLEKLFTAKANDAGTVSKLCHLFLEALKENFKVHPAHKVAMILDPQQKLRPVPPYQHEEIISKVCELINEVKESWAEEADFEPAAKKARSATGEHPAAQEEDRLGKNEVYDYLQEPLFQATPDLFQYWSCVTQKHTKLAKLAFWLLAVPAVGARSGCVNMCEQALLIKRRRLLSPEDMNKLMFLKSNML.

At Met1 the chain carries N-acetylmethionine. The interval 1–56 (MSQPDGAAAPQVDGASAPGRKSAVNRERLKRSQKSSKVEGPEPVPAEASLSAEQGT) is disordered. Glycyl lysine isopeptide (Lys-Gly) (interchain with G-Cter in SUMO2) cross-links involve residues Lys63 and Lys81. C2H2-type zinc fingers lie at residues 146-168 (YECGICGKKYKYYNCFQTHVRAH) and 187-209 (YTCDICGKKYKYYSCFQEHRDLH). Residue Lys238 forms a Glycyl lysine isopeptide (Lys-Gly) (interchain with G-Cter in SUMO2) linkage. The C2H2-type 3 zinc finger occupies 255 to 277 (YTCEFCGKQYKYYTPYQEHVALH). Disordered stretches follow at residues 283 to 305 (APGWEPPEDPDTGSECSHPEVTP) and 337 to 390 (TPPA…SSEP). The span at 339 to 354 (PATQTQTFRAPNSGSP) shows a compositional bias: polar residues. Residues 365–379 (FSRRVESKAQNHFEE) are compositionally biased toward basic and acidic residues. Residues 391–413 (YTCGACGIQFQFYSNLLEHMQSH) form a C2H2-type 4 zinc finger. Residues 419–428 (NNITSNQSRS) show a composition bias toward polar residues. Residues 419–461 (NNITSNQSRSPPAAVEEKWKPQAQRNSANNTTTSGLTPNSVIP) are disordered. Residue Lys436 forms a Glycyl lysine isopeptide (Lys-Gly) (interchain with G-Cter in SUMO2) linkage. Over residues 441–458 (AQRNSANNTTTSGLTPNS) the composition is skewed to polar residues.

It belongs to the krueppel C2H2-type zinc-finger protein family. Interacts with UHRF2.

The protein resides in the nucleus. It localises to the chromosome. Its function is as follows. Regulates UHRF2 function as a specific 5-hydroxymethylcytosine (5hmC) reader by regulating its chromatin localization. The chain is Zinc finger protein 618 (Znf618) from Mus musculus (Mouse).